Reading from the N-terminus, the 409-residue chain is Pentatricopeptide repeat-containing protein At1g01970 (409 aa).

6 PPR repeats span residues Asn164–Ile198, Asp199–Leu233, Asp234–Ala268, Gly269–Pro303, Asp304–Ala338, and Thr339–Leu373.

It belongs to the PPR family. P subfamily.

In Arabidopsis thaliana (Mouse-ear cress), this protein is Pentatricopeptide repeat-containing protein At1g01970.